The following is a 106-amino-acid chain: Small ribosomal subunit protein uS17 (106 aa).

It belongs to the universal ribosomal protein uS17 family. Part of the 30S ribosomal subunit.

Functionally, one of the primary rRNA binding proteins, it binds specifically to the 5'-end of 16S ribosomal RNA. The sequence is that of Small ribosomal subunit protein uS17 from Methanosphaera stadtmanae (strain ATCC 43021 / DSM 3091 / JCM 11832 / MCB-3).